Reading from the N-terminus, the 424-residue chain is MADCLSSQLERYANQVASSAGIIISHLKTLKDEPSTLPSETTVPTAIGTAQLQLAEAAFQLLHLTRDPGNVLTNLTVDLQVISSVRWLLHFEIPSLVPQEGTISYQELSCLANVPDNLLRSHLRLAMTCHLFQESGPTGMVAHSAVSRKLASDPSLAYWGQYFANTVFPTATQSVNATATWADSKQLNETAHNLAFDHRGTFFDYIAQDPARTVEFANSMRAVSTTGPFDTCHLCKSFDWSSLGDGVVVDMGGSTGHASITLAESFPSLRFVVQDLPDVVSDSIKRLEERQLPLSVTSRIRFQGHSLFHLQPVKGAAVYLLRQILHDWPNQEAIKILRSIVPAMGPKSRIFIADIVLPKTGSIPATEERVMRCNDLLLHQFTNTLERTFEDWQAIVSRVDDRLQIQHVYRDPGSILSLLVLEIV.

Position 275 (aspartate 275) interacts with S-adenosyl-L-methionine. Residue histidine 326 is the Proton acceptor of the active site.

The protein belongs to the class I-like SAM-binding methyltransferase superfamily. Cation-independent O-methyltransferase family.

Its pathway is secondary metabolite biosynthesis. Cytochrome P450 monooxygenase; part of the gene cluster that mediates the biosynthesis of bifonsecin B, a dimeric gamma-naphthopyrone. The first step in the biosynthesis of bifonsecin B is the production of gamma-naphthopyrone precursor YWA1 by the non-reducing polyketide synthase albA, via condensation of one acetyl-CoA starter unit with 6 malonyl-CoA units. YWA1 is then methylated by bfoE at position C-6 to yield foncesin which is further methylated at position C-8 by bfoD to produce fonsecin B. A key enzyme in the biosynthetic pathway is the cytochrome P450 monooxygenase bfoB which catalyzes the oxidative dimerization of fonsecin B to bifonsecin B. Bfob also catalyzes the oxidative dimerization of rubrofusarin B into nigerone. The stereoselectivity of bfoB is influenced by the two natural monomeric substrates; homodimerization of fonsecin B yields a stereochemically pure biaryl, M-foncerine B, while rubrofusarin B yields a mixture of enantiomers M- and P-nigerone. This Aspergillus brasiliensis (strain CBS 101740 / IMI 381727 / IBT 21946) protein is O-methyltransferase bfoD.